A 356-amino-acid polypeptide reads, in one-letter code: D-xylulose reductase (356 aa).

Residues Cys-44, His-69, and Glu-155 each contribute to the Zn(2+) site. Position 179-184 (179-184 (GAGPIG)) interacts with NAD(+).

The protein belongs to the zinc-containing alcohol dehydrogenase family. The cofactor is Zn(2+).

The catalysed reaction is xylitol + NAD(+) = D-xylulose + NADH + H(+). It functions in the pathway carbohydrate degradation; L-arabinose degradation via L-arabinitol; D-xylulose 5-phosphate from L-arabinose (fungal route): step 4/5. In Saccharomyces cerevisiae (strain ATCC 204508 / S288c) (Baker's yeast), this protein is D-xylulose reductase (XYL2).